Here is a 105-residue protein sequence, read N- to C-terminus: Large ribosomal subunit protein bL21 (105 aa).

It belongs to the bacterial ribosomal protein bL21 family. In terms of assembly, part of the 50S ribosomal subunit. Contacts protein L20.

In terms of biological role, this protein binds to 23S rRNA in the presence of protein L20. This Rickettsia bellii (strain OSU 85-389) protein is Large ribosomal subunit protein bL21.